Reading from the N-terminus, the 325-residue chain is Heat-inducible transcription repressor HrcA (325 aa).

It belongs to the HrcA family.

Negative regulator of class I heat shock genes (grpE-dnaK-dnaJ and groELS operons). Prevents heat-shock induction of these operons. This Staphylococcus epidermidis (strain ATCC 35984 / DSM 28319 / BCRC 17069 / CCUG 31568 / BM 3577 / RP62A) protein is Heat-inducible transcription repressor HrcA.